Here is a 94-residue protein sequence, read N- to C-terminus: Ferredoxin-like protein (94 aa).

4Fe-4S ferredoxin-type domains lie at 20 to 52 (PHIR…RETN) and 53 to 83 (GKVT…WEWP).

The protein to ferredoxins from P.putida and C.tartarivorum, ferredoxin I from A.vinelandii, ferredoxin II from D.desulfuricans.

Functionally, could be a 3Fe-4S cluster-containing protein. In Azotobacter vinelandii, this protein is Ferredoxin-like protein (fixX).